The following is a 329-amino-acid chain: Pantothenate kinase (329 aa).

Residue 107–114 participates in ATP binding; it reads GSVAVGKS.

It belongs to the prokaryotic pantothenate kinase family.

It localises to the cytoplasm. It carries out the reaction (R)-pantothenate + ATP = (R)-4'-phosphopantothenate + ADP + H(+). The protein operates within cofactor biosynthesis; coenzyme A biosynthesis; CoA from (R)-pantothenate: step 1/5. The protein is Pantothenate kinase of Streptomyces avermitilis (strain ATCC 31267 / DSM 46492 / JCM 5070 / NBRC 14893 / NCIMB 12804 / NRRL 8165 / MA-4680).